The following is a 336-amino-acid chain: tRNA N6-adenosine threonylcarbamoyltransferase (336 aa).

Residues H114 and H118 each coordinate Fe cation. Substrate contacts are provided by residues 136-140 (LVSGG), D169, G182, D186, and N275. A Fe cation-binding site is contributed by D301.

This sequence belongs to the KAE1 / TsaD family. The cofactor is Fe(2+).

It localises to the cytoplasm. The enzyme catalyses L-threonylcarbamoyladenylate + adenosine(37) in tRNA = N(6)-L-threonylcarbamoyladenosine(37) in tRNA + AMP + H(+). Its function is as follows. Required for the formation of a threonylcarbamoyl group on adenosine at position 37 (t(6)A37) in tRNAs that read codons beginning with adenine. Is involved in the transfer of the threonylcarbamoyl moiety of threonylcarbamoyl-AMP (TC-AMP) to the N6 group of A37, together with TsaE and TsaB. TsaD likely plays a direct catalytic role in this reaction. The protein is tRNA N6-adenosine threonylcarbamoyltransferase of Streptococcus pneumoniae (strain P1031).